Here is a 295-residue protein sequence, read N- to C-terminus: UDP-N-acetylenolpyruvoylglucosamine reductase (295 aa).

The FAD-binding PCMH-type domain maps to 26–189 (VGGQADILFK…IEAEFKGVSS (164 aa)). Residue Arg-169 is part of the active site. The active-site Proton donor is the Cys-218. The active site involves Glu-288.

Belongs to the MurB family. It depends on FAD as a cofactor.

It localises to the cytoplasm. The catalysed reaction is UDP-N-acetyl-alpha-D-muramate + NADP(+) = UDP-N-acetyl-3-O-(1-carboxyvinyl)-alpha-D-glucosamine + NADPH + H(+). It functions in the pathway cell wall biogenesis; peptidoglycan biosynthesis. Cell wall formation. In Wolbachia sp. subsp. Brugia malayi (strain TRS), this protein is UDP-N-acetylenolpyruvoylglucosamine reductase.